A 236-amino-acid chain; its full sequence is 2-C-methyl-D-erythritol 4-phosphate cytidylyltransferase (236 aa).

Belongs to the IspD/TarI cytidylyltransferase family. IspD subfamily. Homodimer.

It catalyses the reaction 2-C-methyl-D-erythritol 4-phosphate + CTP + H(+) = 4-CDP-2-C-methyl-D-erythritol + diphosphate. It participates in isoprenoid biosynthesis; isopentenyl diphosphate biosynthesis via DXP pathway; isopentenyl diphosphate from 1-deoxy-D-xylulose 5-phosphate: step 2/6. Its function is as follows. Catalyzes the formation of 4-diphosphocytidyl-2-C-methyl-D-erythritol from CTP and 2-C-methyl-D-erythritol 4-phosphate (MEP). In Salmonella newport (strain SL254), this protein is 2-C-methyl-D-erythritol 4-phosphate cytidylyltransferase.